The sequence spans 309 residues: Methionyl-tRNA formyltransferase (309 aa).

(6S)-5,6,7,8-tetrahydrofolate is bound at residue 109-112 (SLLP).

The protein belongs to the Fmt family.

The enzyme catalyses L-methionyl-tRNA(fMet) + (6R)-10-formyltetrahydrofolate = N-formyl-L-methionyl-tRNA(fMet) + (6S)-5,6,7,8-tetrahydrofolate + H(+). Functionally, attaches a formyl group to the free amino group of methionyl-tRNA(fMet). The formyl group appears to play a dual role in the initiator identity of N-formylmethionyl-tRNA by promoting its recognition by IF2 and preventing the misappropriation of this tRNA by the elongation apparatus. The polypeptide is Methionyl-tRNA formyltransferase (Clostridioides difficile (strain 630) (Peptoclostridium difficile)).